Reading from the N-terminus, the 684-residue chain is Gabija protein GajB (684 aa).

The UvrD-like helicase ATP-binding domain occupies 14-351 (EQKSINAIFN…IEVINKIRND (338 aa)). Position 35 to 42 (35 to 42 (SGAGAGKT)) interacts with ATP.

This sequence belongs to the helicase family. In terms of assembly, homodimer. Interacts with GajA; 2 GajB dimers dock at opposite sides of the GajA complex to form a 4:4 GajA-GajB assembly (GajAB). GajAB interacts with Bacillus phage Phi3T Gad1 protein; this interaction forms a 4:4:8 GajAB-Gad1 complex and leads to GajAB inhibition.

In terms of biological role, component of antiviral defense system Gabija type II, composed of GajA and GajB. Expression of Gabija type II in B.subtilis (strain BEST7003) confers resistance to phages phi105, and SpBeta. May be a helicase or contribute to GajA activation. The protein is Gabija protein GajB of Bacillus cereus (strain HuB5-5).